The sequence spans 785 residues: Mitochondrial intermediate peptidase (785 aa).

Residues 1–27 constitute a mitochondrion transit peptide; the sequence is MLKAVMPRPWVCSRCVKRQIQSSRGLA. The tract at residues 26–52 is disordered; that stretch reads LATASTQYREPRPVPTDHSAPGAKHDD. Residue His-566 coordinates Zn(2+). Residue Glu-567 is part of the active site. Residues His-570 and His-573 each coordinate Zn(2+).

This sequence belongs to the peptidase M3 family. Zn(2+) serves as cofactor.

It localises to the mitochondrion matrix. It carries out the reaction Release of an N-terminal octapeptide as second stage of processing of some proteins imported into the mitochondrion.. Its function is as follows. Cleaves proteins, imported into the mitochondrion, to their mature size. While most mitochondrial precursor proteins are processed to the mature form in one step by mitochondrial processing peptidase (MPP), the sequential cleavage by MIP of an octapeptide after initial processing by MPP is a required step for a subgroup of nuclear-encoded precursor proteins destined for the matrix or the inner membrane. The chain is Mitochondrial intermediate peptidase (oct1) from Sclerotinia sclerotiorum (strain ATCC 18683 / 1980 / Ss-1) (White mold).